The primary structure comprises 172 residues: RNA pyrophosphohydrolase (172 aa).

One can recognise a Nudix hydrolase domain in the interval 6 to 149; that stretch reads GFRANVGIII…KRDVYRKVMK (144 aa). Residues 38 to 59 carry the Nudix box motif; it reads GGLDDGESAEEAMYRELYEEVG.

This sequence belongs to the Nudix hydrolase family. RppH subfamily. Requires a divalent metal cation as cofactor.

In terms of biological role, accelerates the degradation of transcripts by removing pyrophosphate from the 5'-end of triphosphorylated RNA, leading to a more labile monophosphorylated state that can stimulate subsequent ribonuclease cleavage. The sequence is that of RNA pyrophosphohydrolase from Shewanella denitrificans (strain OS217 / ATCC BAA-1090 / DSM 15013).